Reading from the N-terminus, the 285-residue chain is Protease HtpX homolog (285 aa).

The next 2 membrane-spanning stretches (helical) occupy residues 7-27 and 30-50; these read TAMLMAAITALFIVIGGMIGG and GMTIALLFALGMNFFSYWFSD. His131 serves as a coordination point for Zn(2+). Residue Glu132 is part of the active site. Residue His135 participates in Zn(2+) binding. Transmembrane regions (helical) follow at residues 146–166 and 177–197; these read ITATMAGAISAIANFAMFFGG and IAGIAVALLAPIAGALIQMAI. Glu202 provides a ligand contact to Zn(2+).

This sequence belongs to the peptidase M48B family. Zn(2+) serves as cofactor.

It is found in the cell inner membrane. The chain is Protease HtpX homolog from Burkholderia multivorans (strain ATCC 17616 / 249).